The following is a 240-amino-acid chain: Aspartate/glutamate leucyltransferase (240 aa).

It belongs to the R-transferase family. Bpt subfamily.

The protein localises to the cytoplasm. The catalysed reaction is N-terminal L-glutamyl-[protein] + L-leucyl-tRNA(Leu) = N-terminal L-leucyl-L-glutamyl-[protein] + tRNA(Leu) + H(+). It catalyses the reaction N-terminal L-aspartyl-[protein] + L-leucyl-tRNA(Leu) = N-terminal L-leucyl-L-aspartyl-[protein] + tRNA(Leu) + H(+). In terms of biological role, functions in the N-end rule pathway of protein degradation where it conjugates Leu from its aminoacyl-tRNA to the N-termini of proteins containing an N-terminal aspartate or glutamate. The protein is Aspartate/glutamate leucyltransferase of Gluconobacter oxydans (strain 621H) (Gluconobacter suboxydans).